A 158-amino-acid chain; its full sequence is MLTHLDSQGRAHMVDVTDKATTFREATAEARVRMLPATLQMIVAGEHPKGDVFAVARIAGIQAAKKTSDLIPLCHPLMLTGVKVELSAEGDDCVHITARCKLSGQTGVEMEALTAASVAALTIYDMCKAVDRGMVIEQVRLLEKLGGKSGHYKLEEQA.

Substrate-binding positions include 73–75 (LCH) and 110–111 (ME). Aspartate 125 is a catalytic residue.

Belongs to the MoaC family. Homohexamer; trimer of dimers.

The enzyme catalyses (8S)-3',8-cyclo-7,8-dihydroguanosine 5'-triphosphate = cyclic pyranopterin phosphate + diphosphate. Its pathway is cofactor biosynthesis; molybdopterin biosynthesis. Functionally, catalyzes the conversion of (8S)-3',8-cyclo-7,8-dihydroguanosine 5'-triphosphate to cyclic pyranopterin monophosphate (cPMP). This chain is Cyclic pyranopterin monophosphate synthase, found in Ectopseudomonas mendocina (strain ymp) (Pseudomonas mendocina).